The sequence spans 108 residues: Anthranilate 1,2-dioxygenase ferredoxin subunit (108 aa).

The Rieske domain maps to 9–105; that stretch reads WHPLGAIDEF…IRIVDGQVEV (97 aa). [2Fe-2S] cluster is bound by residues cysteine 49, histidine 51, cysteine 68, and histidine 71.

It belongs to the bacterial ring-hydroxylating dioxygenase ferredoxin component family. As to quaternary structure, part of a multicomponent enzyme system composed of a reductase (AndAa), a ferredoxin (AndAb) and a two-subunit oxygenase component (AndAc and AndAd). [2Fe-2S] cluster is required as a cofactor.

Its pathway is aromatic compound metabolism; anthranilate degradation via hydroxylation; catechol from anthranilate: step 1/1. Part of the multicomponent anthranilate dioxygenase, that converts anthranilate to catechol. This protein seems to be a 2Fe-2S ferredoxin. The sequence is that of Anthranilate 1,2-dioxygenase ferredoxin subunit from Burkholderia cepacia (Pseudomonas cepacia).